A 351-amino-acid polypeptide reads, in one-letter code: uncharacterized protein (351 aa).

Residues aspartate 215, aspartate 226, histidine 290, glutamate 319, and glutamate 333 each contribute to the Mn(2+) site.

It belongs to the peptidase M24B family. Mn(2+) is required as a cofactor.

This is an uncharacterized protein from Staphylococcus aureus (strain USA300).